Here is a 322-residue protein sequence, read N- to C-terminus: Probable cardiolipin synthase (CMP-forming) (322 aa).

Transmembrane regions (helical) follow at residues 143 to 163, 199 to 219, and 289 to 309; these read IGYV…AFAG, LVIS…IVVF, and LQGL…SYVM.

Belongs to the CDP-alcohol phosphatidyltransferase class-I family.

It is found in the mitochondrion inner membrane. The enzyme catalyses a CDP-1,2-diacyl-sn-glycerol + a 1,2-diacyl-sn-glycero-3-phospho-(1'-sn-glycerol) = a cardiolipin + CMP + H(+). Its function is as follows. Catalyzes the synthesis of cardiolipin (CL) (diphosphatidylglycerol) by specifically transferring a phosphatidyl group from CDP-diacylglycerol to phosphatidylglycerol (PG). CL is a key phospholipid in mitochondrial membranes and plays important roles in maintaining the functional integrity and dynamics of mitochondria under both optimal and stress conditions. The polypeptide is Probable cardiolipin synthase (CMP-forming) (CLS) (Drosophila melanogaster (Fruit fly)).